Consider the following 206-residue polypeptide: MANVSVYNIEGKEVGSIELNDAVFGVEVNEHLVHMAVVNQLANNRQGTQSAKTRSEVSGGGRKPWRQKGTGHARQGSTRSPQWTGGGVVFAPKPRDYSFKMNKKEKRIALLSALSSKVADNKIVVLDAFNLDEIKTKKFAEVMSNLKVDKALVVIEGENKNVVLSGRNIPTVKVSATNEINTYDVLKYETLVVTKAAVEKLEEVYA.

The segment at 44-87 (NRQGTQSAKTRSEVSGGGRKPWRQKGTGHARQGSTRSPQWTGGG) is disordered.

This sequence belongs to the universal ribosomal protein uL4 family. Part of the 50S ribosomal subunit.

Its function is as follows. One of the primary rRNA binding proteins, this protein initially binds near the 5'-end of the 23S rRNA. It is important during the early stages of 50S assembly. It makes multiple contacts with different domains of the 23S rRNA in the assembled 50S subunit and ribosome. Forms part of the polypeptide exit tunnel. The polypeptide is Large ribosomal subunit protein uL4 (Lachnospira eligens (strain ATCC 27750 / DSM 3376 / VPI C15-48 / C15-B4) (Eubacterium eligens)).